A 302-amino-acid chain; its full sequence is UDP-N-acetylenolpyruvoylglucosamine reductase (302 aa).

Residues 31-196 (KIGGPADVLA…LRAWISLERG (166 aa)) form the FAD-binding PCMH-type domain. The active site involves Arg-175. Ser-225 serves as the catalytic Proton donor. The active site involves Glu-295.

The protein belongs to the MurB family. FAD is required as a cofactor.

Its subcellular location is the cytoplasm. The catalysed reaction is UDP-N-acetyl-alpha-D-muramate + NADP(+) = UDP-N-acetyl-3-O-(1-carboxyvinyl)-alpha-D-glucosamine + NADPH + H(+). Its pathway is cell wall biogenesis; peptidoglycan biosynthesis. Functionally, cell wall formation. This chain is UDP-N-acetylenolpyruvoylglucosamine reductase, found in Caldanaerobacter subterraneus subsp. tengcongensis (strain DSM 15242 / JCM 11007 / NBRC 100824 / MB4) (Thermoanaerobacter tengcongensis).